The sequence spans 436 residues: p-aminobenzoyl-glutamate hydrolase subunit A (436 aa).

Belongs to the peptidase M20 family. As to quaternary structure, forms a heterodimer with AbgB. Requires Mn(2+) as cofactor.

Its function is as follows. Component of the p-aminobenzoyl-glutamate hydrolase multicomponent enzyme system which catalyzes the cleavage of p-aminobenzoyl-glutamate (PABA-GLU) to form p-aminobenzoate (PABA) and glutamate. AbgAB does not degrade dipeptides and the physiological role of abgABT should be clarified. The protein is p-aminobenzoyl-glutamate hydrolase subunit A (abgA) of Escherichia coli (strain K12).